The primary structure comprises 187 residues: Elongation factor P (187 aa).

It belongs to the elongation factor P family.

It is found in the cytoplasm. It functions in the pathway protein biosynthesis; polypeptide chain elongation. In terms of biological role, involved in peptide bond synthesis. Stimulates efficient translation and peptide-bond synthesis on native or reconstituted 70S ribosomes in vitro. Probably functions indirectly by altering the affinity of the ribosome for aminoacyl-tRNA, thus increasing their reactivity as acceptors for peptidyl transferase. The chain is Elongation factor P from Synechococcus sp. (strain WH7803).